A 395-amino-acid chain; its full sequence is Tryptophan--tRNA ligase (395 aa).

ATP contacts are provided by residues 8–10 (RPT) and 16–17 (GH). The 'HIGH' region motif lies at 9–17 (PTGKLHLGH). Positions 117 to 179 (RLTDLEKEFK…EIEPEILKRL (63 aa)) are insert. D204 serves as a coordination point for L-tryptophan. ATP-binding positions include 216–218 (GED), I254, and 261–265 (KMSKS). Residues 261-265 (KMSKS) carry the 'KMSKS' region motif.

It belongs to the class-I aminoacyl-tRNA synthetase family. As to quaternary structure, homodimer.

The protein localises to the cytoplasm. The catalysed reaction is tRNA(Trp) + L-tryptophan + ATP = L-tryptophyl-tRNA(Trp) + AMP + diphosphate + H(+). Its function is as follows. Catalyzes the attachment of tryptophan to tRNA(Trp). The polypeptide is Tryptophan--tRNA ligase (Aquifex aeolicus (strain VF5)).